Here is a 253-residue protein sequence, read N- to C-terminus: Sporulation initiation inhibitor protein Soj (253 aa).

ATP is bound by residues lysine 11, glycine 12, glycine 13, valine 14, glycine 15, lysine 16, threonine 17, threonine 18, proline 214, and asparagine 216. Mg(2+) is bound at residue threonine 17.

The protein belongs to the ParA family. In terms of assembly, dimerizes in the presence of ATP but not ADP; ATP-binding is required for double-stranded (ds)DNA-binding. Interacts with DnaA.

Its subcellular location is the cytoplasm. It carries out the reaction ATP + H2O = ADP + phosphate + H(+). Functionally, acts as a spatially regulated molecular switch, capable of either inhibiting or activating the ability of DnaA to initiate DNA replication. Monomeric ADP-Soj inhibits oligomerization of DnaA on single-stranded (ss)- or double-stranded (ds)DNA, thus inhibiting DNA replication initiation; does not disassemble premade DnaA-DNA filaments. Decreases the residence time of DnaA on the chromosome at its binding sites (oriC, replication forks and (probably) promoter-binding sites). Soj forms nucleoprotein filaments in an ATP- and DNA-dependent manner. Inhibits the initiation of sporulation, Spo0J antagonizes this inhibition. Soj ultimately inhibits the activation (phosphorylation) of Spo0A. The chain is Sporulation initiation inhibitor protein Soj from Bacillus subtilis (strain 168).